Here is a 360-residue protein sequence, read N- to C-terminus: tRNA N6-adenosine threonylcarbamoyltransferase (360 aa).

Fe cation is bound by residues His-115 and His-119. Substrate is bound by residues 137–141, Asp-170, Gly-183, and Asn-283; that span reads LVSGG. A Fe cation-binding site is contributed by Asp-311.

Belongs to the KAE1 / TsaD family. Requires Fe(2+) as cofactor.

Its subcellular location is the cytoplasm. It carries out the reaction L-threonylcarbamoyladenylate + adenosine(37) in tRNA = N(6)-L-threonylcarbamoyladenosine(37) in tRNA + AMP + H(+). Functionally, required for the formation of a threonylcarbamoyl group on adenosine at position 37 (t(6)A37) in tRNAs that read codons beginning with adenine. Is involved in the transfer of the threonylcarbamoyl moiety of threonylcarbamoyl-AMP (TC-AMP) to the N6 group of A37, together with TsaE and TsaB. TsaD likely plays a direct catalytic role in this reaction. In Rhizobium meliloti (strain 1021) (Ensifer meliloti), this protein is tRNA N6-adenosine threonylcarbamoyltransferase.